A 727-amino-acid chain; its full sequence is Non-structural protein 4 (727 aa).

Disordered regions lie at residues 1–38 (MNQSRSFVTGRGRDLSRTPSALSSNSETPGSMSSPSEG) and 673–727 (SMTL…KLSK). Polar residues predominate over residues 17-38 (RTPSALSSNSETPGSMSSPSEG). Residues 712–727 (SRRKARKARAASKLSK) show a composition bias toward basic residues.

This chain is Non-structural protein 4, found in Rice dwarf virus (isolate Akita) (RDV).